A 370-amino-acid chain; its full sequence is Histidinol-phosphate aminotransferase (370 aa).

Position 222 is an N6-(pyridoxal phosphate)lysine (K222).

The protein belongs to the class-II pyridoxal-phosphate-dependent aminotransferase family. Histidinol-phosphate aminotransferase subfamily. In terms of assembly, homodimer. It depends on pyridoxal 5'-phosphate as a cofactor.

The enzyme catalyses L-histidinol phosphate + 2-oxoglutarate = 3-(imidazol-4-yl)-2-oxopropyl phosphate + L-glutamate. Its pathway is amino-acid biosynthesis; L-histidine biosynthesis; L-histidine from 5-phospho-alpha-D-ribose 1-diphosphate: step 7/9. The chain is Histidinol-phosphate aminotransferase from Bacillus cytotoxicus (strain DSM 22905 / CIP 110041 / 391-98 / NVH 391-98).